The sequence spans 152 residues: Ninjurin-1 (152 aa).

At methionine 1 the chain carries N-acetylmethionine. A compositionally biased stretch (acidic residues) spans 1–10 (MDPGTEEYEL). Residues 1–30 (MDPGTEEYELNGDLRPGSPGSPDASPPRWG) are disordered. The Extracellular portion of the chain corresponds to 1-78 (MDPGTEEYEL…EQGNEFAFFV (78 aa)). Residues 16–27 (PGSPGSPDASPP) are compositionally biased toward low complexity. Phosphoserine is present on residues serine 18, serine 21, and serine 25. The interval 26–37 (PPRWGLRNRPIN) is N-terminal adhesion motif. Positions 40 to 69 (HYANKKSAAESMLDIALLMANASQLKAVVE) are required to induce plasma membrane rupture. The helix alpha1 stretch occupies residues 44 to 55 (KKSAAESMLDIA). Residues 58–74 (MANASQLKAVVEQGNEF) form a helix alpha2 region. The N-linked (GlcNAc...) asparagine glycan is linked to asparagine 60. Residues 79–103 (PLVVLISISLVLQIGVGVLLIFLVK) form a helical membrane-spanning segment. At 104–113 (YDLNNPAKHA) the chain is on the cytoplasmic side. A helical membrane pass occupies residues 114-138 (KLDFLNNLATGLVFIIVVVNIFITA). The Extracellular portion of the chain corresponds to 139-152 (FGVQKPVMDVAPRQ).

Belongs to the ninjurin family. As to quaternary structure, homodimer; in absence of death stimuli, forms an inactive homodimer. Homooligomer; in response to death stimuli, homooligomerizes into long, highly branched filaments and large, ring-shaped structures in the membrane. The topology shown in the entry corresponds to the activated form. Post-translationally, cleaved by MMP9 protease to generate the Secreted ninjurin-1 form. In terms of processing, N-linked glycosylation is required for homooligomerization.

It is found in the cell membrane. It localises to the synaptic cell membrane. Its subcellular location is the secreted. With respect to regulation, in response to death stimuli, homooligomerizes and disrupts membrane integrity by introducing the hydrophilic faces of alpha1 and alpha2 helices into the hydrophobic membrane. Homooligomerization and ability to mediate plasma membrane rupture is inhibited by glycine; it is unclear whether glycine directly or indirectly inhibits homooligomerization. In normal conditions, NINJ1 is autoinhibited via formation of a homodimer: in the inactive homodimer, the alpha1 and alpha2 helices (residues 44-74) form a single transmembrane region without a kink, in which hydrophilic faces of alpha1 and alpha2 helices are sequestered. Functionally, effector of various programmed cell death, such as pyroptosis and necroptosis, which mediates plasma membrane rupture (cytolysis). Oligomerizes in response to death stimuli and forms ring-like structures on the plasma membrane: acts by cutting and shedding membrane disks, like a cookie cutter, leading to membrane damage and loss that cannot be repaired by the cell. Plasma membrane rupture leads to release intracellular molecules named damage-associated molecular patterns (DAMPs) that propagate the inflammatory response. Mechanistically, mediates plasma membrane rupture by introducing hydrophilic faces of 2 alpha helices into the hydrophobic membrane. Induces plasma membrane rupture downstream of Gasdermin (GSDMA, GSDMB, GSDMC, GSDMD, or GSDME) or MLKL during pyroptosis or necroptosis, respectively. Acts as an effector of PANoptosis downstream of CASP1, CASP4, CASP8 and RIPK3. Also induces plasma membrane rupture in response to cell swelling caused by osmotic stress and ferroptosis downstream of lipid peroxidation. Acts as a regulator of Toll-like receptor 4 (TLR4) signaling triggered by lipopolysaccharide (LPS) during systemic inflammation; directly binds LPS. Involved in leukocyte migration during inflammation by promoting transendothelial migration of macrophages via homotypic binding. Promotes the migration of monocytes across the brain endothelium to central nervous system inflammatory lesions. Also acts as a homophilic transmembrane adhesion molecule involved in various processes such as axonal growth, cell chemotaxis and angiogenesis. Promotes cell adhesion by mediating homophilic interactions via its extracellular N-terminal adhesion motif (N-NAM). Involved in the progression of the inflammatory stress by promoting cell-to-cell interactions between immune cells and endothelial cells. Plays a role in nerve regeneration by promoting maturation of Schwann cells. Acts as a regulator of angiogenesis. Promotes the formation of new vessels by mediating the interaction between capillary pericyte cells and endothelial cells. Promotes osteoclasts development by enhancing the survival of prefusion osteoclasts. Also involved in striated muscle growth and differentiation. Secreted form generated by cleavage, which has chemotactic activity. Acts as an anti-inflammatory mediator by promoting monocyte recruitment, thereby ameliorating atherosclerosis. In Rattus norvegicus (Rat), this protein is Ninjurin-1.